The chain runs to 358 residues: Uroporphyrinogen decarboxylase (358 aa).

Substrate is bound by residues 28-32 (RQAGR), aspartate 78, tyrosine 154, serine 208, and histidine 324.

This sequence belongs to the uroporphyrinogen decarboxylase family. As to quaternary structure, homodimer.

Its subcellular location is the cytoplasm. The catalysed reaction is uroporphyrinogen III + 4 H(+) = coproporphyrinogen III + 4 CO2. It participates in porphyrin-containing compound metabolism; protoporphyrin-IX biosynthesis; coproporphyrinogen-III from 5-aminolevulinate: step 4/4. Its function is as follows. Catalyzes the decarboxylation of four acetate groups of uroporphyrinogen-III to yield coproporphyrinogen-III. This is Uroporphyrinogen decarboxylase from Acidiphilium cryptum (strain JF-5).